Consider the following 337-residue polypeptide: DnaJ homolog dnj-2 (337 aa).

A helical transmembrane segment spans residues 4-24 (AIAAPILFLLVSFFVQECESV). A J domain is found at 36 to 105 (NCYDVLEVNR…EAKTNYDYYL (70 aa)). 2 helical membrane-spanning segments follow: residues 127–147 (VDLR…QFLS) and 222–242 (LAWH…WTAL). Residues 293 to 323 (LKRNCATWKAERDAAEQEKMAQSGRYKRYKR) adopt a coiled-coil conformation.

The protein belongs to the DNAJC25 family.

It is found in the membrane. The protein is DnaJ homolog dnj-2 (dnj-2) of Caenorhabditis elegans.